Here is a 372-residue protein sequence, read N- to C-terminus: Glutamate 5-kinase (372 aa).

K14 is an ATP binding site. S54, D141, and N153 together coordinate substrate. Residue 173–174 (TD) participates in ATP binding. The 79-residue stretch at 280–358 (RGHVVIDAGA…GEIEAVLGYM (79 aa)) folds into the PUA domain.

This sequence belongs to the glutamate 5-kinase family.

The protein resides in the cytoplasm. The catalysed reaction is L-glutamate + ATP = L-glutamyl 5-phosphate + ADP. It participates in amino-acid biosynthesis; L-proline biosynthesis; L-glutamate 5-semialdehyde from L-glutamate: step 1/2. Catalyzes the transfer of a phosphate group to glutamate to form L-glutamate 5-phosphate. This is Glutamate 5-kinase from Burkholderia thailandensis (strain ATCC 700388 / DSM 13276 / CCUG 48851 / CIP 106301 / E264).